A 306-amino-acid chain; its full sequence is MWFKNLLIYRLTQDVPFDAEALETALATKPARACASQEVATYGFVAPFGKGEDAPLVHISQDFLLIAARKEERILPGSVVRDALKEKVDEIEAEQMRKVYKKERDQLKDEIIQAFLPRAFIRRSATFAAIAPRQGLILVNASSPKRAEDLLSTLREVIGSLPVRPLTVKVSPSATMTDWVKTQKAADNFFVLDECELRDTHEDGGIVRCKRQDLTSDEIQLHLNTGKVVTQLSLAWQDKLSFVLDDKMVVKRLKFEDLLQDQAEQDGGEEALGQLDASFTLMMLTFGEFLPELFEALGGEEIPQGI.

This sequence belongs to the RdgC family.

It localises to the cytoplasm. Its subcellular location is the nucleoid. May be involved in recombination. The polypeptide is Recombination-associated protein RdgC (Pseudomonas syringae pv. tomato (strain ATCC BAA-871 / DC3000)).